The following is a 339-amino-acid chain: Methylglutaconyl-CoA hydratase, mitochondrial (339 aa).

The N-terminal 67 residues, Met-1–Tyr-67, are a transit peptide targeting the mitochondrion. Residue Lys-100 is modified to N6-acetyllysine; alternate. Lys-100 is subject to N6-succinyllysine; alternate. Residues Lys-105–Lys-119 form an RNA-binding region. The residue at position 109 (Lys-109) is an N6-succinyllysine. Residues Lys-113 and Lys-144 each carry the N6-acetyllysine; alternate modification. Lys-113 and Lys-144 each carry N6-succinyllysine; alternate. 2 positions are modified to N6-succinyllysine: Lys-148 and Lys-160. Residues Lys-204 and Lys-211 each carry the N6-acetyllysine; alternate modification. 2 positions are modified to N6-succinyllysine; alternate: Lys-204 and Lys-211. Residue Lys-329 is modified to N6-succinyllysine.

It belongs to the enoyl-CoA hydratase/isomerase family. Homohexamer.

The protein resides in the mitochondrion. It carries out the reaction (3S)-3-hydroxy-3-methylglutaryl-CoA = 3-methyl-(2E)-glutaconyl-CoA + H2O. The enzyme catalyses (3S)-citramalyl-CoA = itaconyl-CoA + H2O. The catalysed reaction is 3-hydroxyisovaleryl-CoA = 3-methylbut-2-enoyl-CoA + H2O. It catalyses the reaction (S)-3-hydroxyglutaryl-CoA = (2E)-glutaconyl-CoA + H2O. It functions in the pathway amino-acid degradation; L-leucine degradation; (S)-3-hydroxy-3-methylglutaryl-CoA from 3-isovaleryl-CoA: step 3/3. Its function is as follows. Catalyzes the fifth step in the leucine degradation pathway, the reversible hydration of 3-methylglutaconyl-CoA (3-MG-CoA) to 3-hydroxy-3-methylglutaryl-CoA (HMG-CoA). Can catalyze the reverse reaction but at a much lower rate in vitro. HMG-CoA is then quickly degraded by another enzyme (such as HMG-CoA lyase) to give acetyl-CoA and acetoacetate. Uses other substrates such as (2E)-glutaconyl-CoA efficiently in vitro, and to a lesser extent 3-methylcrotonyl-CoA (3-methyl-(2E)-butenoyl-CoA), crotonyl-CoA ((2E)-butenoyl-CoA) and 3-hydroxybutanoyl-CoA (the missing carboxylate reduces affinity to the active site). Originally it was identified as an RNA-binding protein as it binds to AU-rich elements (AREs) in vitro. AREs direct rapid RNA degradation and mRNA deadenylation. Might have itaconyl-CoA hydratase activity, converting itaconyl-CoA into citramalyl-CoA in the C5-dicarboxylate catabolism pathway. The C5-dicarboxylate catabolism pathway is required to detoxify itaconate, an antimicrobial metabolite and immunomodulator produced by macrophages during certain infections, that can act as a vitamin B12-poisoning metabolite. This is Methylglutaconyl-CoA hydratase, mitochondrial (AUH) from Homo sapiens (Human).